The chain runs to 147 residues: MKIVIQRVKEASVSIDGKIAGAIDQGLLLLVGIGPDDQAEDIDYAVRKISHMRIFSDSEGKMNRSIQDIEGSVLSISQFTLYADTKKGNRPAFTGAAKPDKASQLYNSFNDHLEELVPVKRGVFGADMQVSLINDGPVTIILDTKNR.

The Gly-cisPro motif, important for rejection of L-amino acids motif lies at 136–137 (GP).

This sequence belongs to the DTD family. As to quaternary structure, homodimer.

The protein resides in the cytoplasm. It carries out the reaction glycyl-tRNA(Ala) + H2O = tRNA(Ala) + glycine + H(+). The enzyme catalyses a D-aminoacyl-tRNA + H2O = a tRNA + a D-alpha-amino acid + H(+). Its function is as follows. An aminoacyl-tRNA editing enzyme that deacylates mischarged D-aminoacyl-tRNAs. Also deacylates mischarged glycyl-tRNA(Ala), protecting cells against glycine mischarging by AlaRS. Acts via tRNA-based rather than protein-based catalysis; rejects L-amino acids rather than detecting D-amino acids in the active site. By recycling D-aminoacyl-tRNA to D-amino acids and free tRNA molecules, this enzyme counteracts the toxicity associated with the formation of D-aminoacyl-tRNA entities in vivo and helps enforce protein L-homochirality. The sequence is that of D-aminoacyl-tRNA deacylase from Streptococcus equi subsp. zooepidemicus (strain MGCS10565).